Reading from the N-terminus, the 418-residue chain is MTTHIHQAWELAKQRFAAVGVDAEAALNQLDRLPVSMHCWQGDDVAGFENPQGQLTGGIQATGNYPGKARNAEELRADLDQALRLIPGPKRLNLHAIYLESDTPVARNEIKPAHFANWVAWARERQLGLDFNPSCFSHPLSADGFTLSHPNPEIRQFWIEHCQASRRVSASFGEQLGTPSVMNIWIPDGMKDTPVDRLAPRRRLLAALDEVIREKLNPAHHIDAVESKLFGIGAESYTVGSNEFYLGYAASRQTALCLDAGHFHPTEVISDKISAAILYVPRLLLHVSRPVRWDSDHVVLLDDETQAIAGEIIRHDLFDRVHIGLDFFDASINRIAAWVIGTRNMKKALLRALLEPTAQLRQLELDGDYTARLALLEEQKSLPWQAVWEMYCERHDTPADAAWLSAVRHYEQHVLSTR.

The Mn(2+) site is built by histidine 262, aspartate 294, and aspartate 296.

This sequence belongs to the rhamnose isomerase family. In terms of assembly, homotetramer. Mn(2+) is required as a cofactor.

The protein localises to the cytoplasm. The catalysed reaction is L-rhamnopyranose = L-rhamnulose. It functions in the pathway carbohydrate degradation; L-rhamnose degradation; glycerone phosphate from L-rhamnose: step 1/3. Functionally, catalyzes the interconversion of L-rhamnose and L-rhamnulose. This Cronobacter sakazakii (strain ATCC BAA-894) (Enterobacter sakazakii) protein is L-rhamnose isomerase.